A 199-amino-acid polypeptide reads, in one-letter code: UPF0301 protein Rfer_1377 (199 aa).

The protein belongs to the UPF0301 (AlgH) family.

The chain is UPF0301 protein Rfer_1377 from Albidiferax ferrireducens (strain ATCC BAA-621 / DSM 15236 / T118) (Rhodoferax ferrireducens).